We begin with the raw amino-acid sequence, 108 residues long: Cytochrome bo(3) ubiquinol oxidase subunit 4 (108 aa).

Over 1-16 (MNKYKKIKNNFDKEKK) the chain is Cytoplasmic. A helical membrane pass occupies residues 17-37 (SYIVGFLFSLFLTIIPFFCTL). The Extracellular segment spans residues 38–46 (NHLFSRKIN). Residues 47 to 67 (FFVILLCALSQIIIHFIYFLH) traverse the membrane as a helical segment. Over 68–77 (LDFSKKNSWN) the chain is Cytoplasmic. The helical transmembrane segment at 78–98 (IISLLFILIIVFIIVFGSIWI) threads the bilayer. Over 99-108 (MYNLNHHVIL) the chain is Extracellular.

This sequence belongs to the cytochrome c oxidase bacterial subunit 4 family. As to quaternary structure, heterooctamer of two A chains, two B chains, two C chains and two D chains.

It is found in the cell membrane. Its function is as follows. Cytochrome bo(3) ubiquinol terminal oxidase is the component of the aerobic respiratory chain of E.coli that predominates when cells are grown at high aeration. Has proton pump activity across the membrane in addition to electron transfer, pumping 2 protons/electron. This chain is Cytochrome bo(3) ubiquinol oxidase subunit 4 (cyoD), found in Buchnera aphidicola subsp. Schizaphis graminum (strain Sg).